A 763-amino-acid chain; its full sequence is 5-methyltetrahydropteroyltriglutamate--homocysteine methyltransferase (763 aa).

5-methyltetrahydropteroyltri-L-glutamate-binding positions include Arg-16–Lys-19 and Lys-117. Residues Ile-438–Ser-440 and Glu-491 each bind L-homocysteine. L-methionine-binding positions include Ile-438–Ser-440 and Glu-491. 5-methyltetrahydropteroyltri-L-glutamate-binding positions include Arg-522 to Cys-523 and Trp-568. Position 606 (Asp-606) interacts with L-homocysteine. Asp-606 provides a ligand contact to L-methionine. Residue Glu-612 coordinates 5-methyltetrahydropteroyltri-L-glutamate. Zn(2+) is bound by residues His-648, Cys-650, and Glu-672. The active-site Proton donor is the His-701. Zn(2+) is bound at residue Cys-733.

The protein belongs to the vitamin-B12 independent methionine synthase family. The cofactor is Zn(2+).

The enzyme catalyses 5-methyltetrahydropteroyltri-L-glutamate + L-homocysteine = tetrahydropteroyltri-L-glutamate + L-methionine. Its pathway is amino-acid biosynthesis; L-methionine biosynthesis via de novo pathway; L-methionine from L-homocysteine (MetE route): step 1/1. Its function is as follows. Catalyzes the transfer of a methyl group from 5-methyltetrahydrofolate to homocysteine resulting in methionine formation. The protein is 5-methyltetrahydropteroyltriglutamate--homocysteine methyltransferase of Pseudomonas paraeruginosa (strain DSM 24068 / PA7) (Pseudomonas aeruginosa (strain PA7)).